The sequence spans 23 residues: Apolipophorin-3 (23 aa).

Belongs to the insect apolipophorin-3 family. Equilibrium between a soluble monomer and a bound lipoprotein form. Apolipophorin-3 associates with lipophorin during lipid loading until each particle contains 9 or 14 molecules of apolipophorin-3. As to expression, hemolymph.

The protein localises to the secreted. In terms of biological role, assists in the loading of diacylglycerol, generated from triacylglycerol stores in the fat body through the action of adipokinetic hormone, into lipophorin, the hemolymph lipoprotein. It increases the lipid carrying capacity of lipophorin by covering the expanding hydrophobic surface resulting from diacylglycerol uptake. It thus plays a critical role in the transport of lipids during flight in several species of insects. The polypeptide is Apolipophorin-3 (Melanoplus sanguinipes (Migratory grasshopper)).